The chain runs to 319 residues: MNTQTRETTSMSDAQDKAATLIEALPWIQRFAGTTMVIKYGGNAMVNDELRRAFAEDIVFLHHVGIHPVVVHGGGPQINSMLGRLGIESEFKGGLRVTTPEAMDVVRMVLTGQVGRELVGLINSHGPYAVGMSGEDGGLLRAVRTGTVVDGEDVDLGLVGEVVGVDPAGIVDILDAGRIPVISTVAPEIVDGGDSVPGAARFQPTGQVLNVNADTAAAAVASALGASKLVILTDVEGLYANWPDKSSLISSLTASELRDMLPRLESGMIPKMAACLKAIDEGVERAHIVDGRLAHSMLLETFTTAGIGTQVVPDEETNA.

Residues 74-75 (GG), R96, and N210 each bind substrate.

Belongs to the acetylglutamate kinase family. ArgB subfamily.

The protein localises to the cytoplasm. The enzyme catalyses N-acetyl-L-glutamate + ATP = N-acetyl-L-glutamyl 5-phosphate + ADP. Its pathway is amino-acid biosynthesis; L-arginine biosynthesis; N(2)-acetyl-L-ornithine from L-glutamate: step 2/4. Functionally, catalyzes the ATP-dependent phosphorylation of N-acetyl-L-glutamate. The polypeptide is Acetylglutamate kinase (Pseudarthrobacter chlorophenolicus (strain ATCC 700700 / DSM 12829 / CIP 107037 / JCM 12360 / KCTC 9906 / NCIMB 13794 / A6) (Arthrobacter chlorophenolicus)).